A 538-amino-acid chain; its full sequence is Cytochrome P450 monooxygenase claM (538 aa).

Residues 36–56 form a helical membrane-spanning segment; it reads LSIGLVVLIGAISSFLLQQFL. Asn306 and Asn425 each carry an N-linked (GlcNAc...) asparagine glycan. A heme-binding site is contributed by Cys472.

Belongs to the cytochrome P450 family. The cofactor is heme.

Its subcellular location is the membrane. The catalysed reaction is 2 nataloe emodin + reduced [NADPH--hemoprotein reductase] + O2 = cladofulvin + oxidized [NADPH--hemoprotein reductase] + 2 H2O + H(+). Its pathway is pigment biosynthesis. In terms of biological role, cytochrome P450 monooxygenase; part of the gene cluster that mediates the biosynthesis of the bianthraquinone cladofulvin, a conidial pigment not required for virulence but that plays a role in fitness and resistance to environmental stresses including UV light and low-temperature stress. The pathway begins with the synthesis of atrochrysone thioester by the polyketide synthase (PKS) claG. The atrochrysone carboxyl ACP thioesterase claF then breaks the thioester bond and releases the atrochrysone carboxylic acid from claG. This compound is decarboxylated by claH to yield emodin, which is further converted to chrysophanol hydroquinone by the reductase claC and the dehydratase claB. The cytochrome monooxygenase P450 claM then catalyzes the dimerization of nataloe-emodin to cladofulvin. This Passalora fulva (Tomato leaf mold) protein is Cytochrome P450 monooxygenase claM.